Here is a 514-residue protein sequence, read N- to C-terminus: MRAFLALIFLTFVMNVESSRPLMAFTPSHGWMNDPNGQFYDSKNELWHLYYQYNPNDTVWGTPLYWGHATSKDLSTWKDYGATIGPDRDEDGIFSGNIVVDHNNTSGFFNDSIDPRQRVVAIYTYNTEGSQTQHVAYSLDGGYTFEKYEHNPVLDVDNINFRDPKVFWHEPTNQWIMVIALSQQFKIQIYGSIDLTNWSLHSNFTGGLFGFQYECPGLIEVPAEGTDESKWVMFIAINPGSPLGGSSNQYFIGSFDGFEFVPDDSQARLMDYGKDFYAFQTFDNAPKESGVVGLAWASNWQYANLAPTKEWRSSMTLARQMTLASRNMNPETKVLSLLQKPIFGESVVAANKISKRNITGQDEQAVKIHKNSTGTFSFDITFSVDSSKNQTGQLQVISGQNGESIRAGFDPTAGQFFVDRGNTSGLKENPFLTDKTSAYVEPWKHQNDLPVYKMFGVIDGNLIEVFLNDGIATLTNTFFIPGTEGLEYLEIESSSDAIHIVESEVKELKLRATS.

Positions 1 to 18 are cleaved as a signal peptide; that stretch reads MRAFLALIFLTFVMNVES. Residues 33-34 and Gln52 contribute to the substrate site; that span reads ND. Asp34 acts as the Nucleophile in catalysis. Asn56 carries N-linked (GlcNAc...) asparagine glycosylation. The substrate site is built by Trp60 and Ser95. N-linked (GlcNAc...) asparagine glycosylation is found at Asn104 and Asn110. 162–163 is a binding site for substrate; that stretch reads RD. 2 N-linked (GlcNAc...) asparagine glycosylation sites follow: Asn197 and Asn203. The substrate site is built by Glu214 and Trp300. The Proton donor/acceptor role is filled by Glu214. 4 N-linked (GlcNAc...) asparagine glycosylation sites follow: Asn357, Asn371, Asn389, and Asn422.

The protein belongs to the glycosyl hydrolase 32 family.

It localises to the secreted. It catalyses the reaction Hydrolysis of terminal, non-reducing (2-&gt;1)- and (2-&gt;6)-linked beta-D-fructofuranose residues in fructans.. Exo-inulinase involved in utilization of the plant storage polymer inulin, consisting of fructooligosaccharides with a degree of polymerization (DP) value from 2 to 60. Splits off terminal fructose units successively from the non-reducing end of the inulin molecule. This is Extracellular exo-inulinase inuE from Meyerozyma guilliermondii (Yeast).